Here is a 769-residue protein sequence, read N- to C-terminus: Metal transporter CNNM4 (769 aa).

The Extracellular segment spans residues 1–175 (MAASAGCYYG…RLRVLEEEKP (175 aa)). N-linked (GlcNAc...) asparagine glycans are attached at residues asparagine 99 and asparagine 115. Positions 175-355 (PLLPIWLQAC…EPYSGIVREE (181 aa)) constitute a CNNM transmembrane domain. A helical membrane pass occupies residues 176 to 196 (LLPIWLQACIIAVLLTLSGIF). The Cytoplasmic segment spans residues 197–237 (SGLNLGLMALDPMELRVVQRCGTEKEKRYASKIEPVRRKGN). Residues 238–258 (YLLCSLLLGNVLVNTTLTALL) constitute an intramembrane region (helical). Over 259 to 261 (DEL) the chain is Cytoplasmic. Residues 262–282 (IGSGLAAVLASTTGIVVLGEI) traverse the membrane as a helical segment. Topologically, residues 283-292 (VPQALCSRHG) are extracellular. The helical transmembrane segment at 293–313 (LAVGANTLWLTRIFMLLTFPV) threads the bilayer. The Cytoplasmic portion of the chain corresponds to 314 to 769 (AYPVSRLLDC…SQHSLQHNAV (456 aa)). CBS domains lie at 374–435 (MTKV…CTPL) and 442–508 (YSHP…ILDE). The disordered stretch occupies residues 717 to 769 (LMSSRLDSSPQSPEGGTRKPDSTLSERSEVLEDETTSLLNQRNSQHSLQHNAV). A compositionally biased stretch (polar residues) spans 721 to 730 (RLDSSPQSPE). Positions 732-746 (GTRKPDSTLSERSEV) are enriched in basic and acidic residues. Polar residues predominate over residues 752–769 (TSLLNQRNSQHSLQHNAV).

Belongs to the ACDP family.

The protein resides in the cell membrane. In terms of biological role, probable metal transporter. This Xenopus tropicalis (Western clawed frog) protein is Metal transporter CNNM4 (cnnm4).